Here is a 317-residue protein sequence, read N- to C-terminus: Pantothenate kinase (317 aa).

Residue 99 to 106 (GSVSVGKS) participates in ATP binding.

The protein belongs to the prokaryotic pantothenate kinase family.

Its subcellular location is the cytoplasm. The enzyme catalyses (R)-pantothenate + ATP = (R)-4'-phosphopantothenate + ADP + H(+). The protein operates within cofactor biosynthesis; coenzyme A biosynthesis; CoA from (R)-pantothenate: step 1/5. This is Pantothenate kinase from Histophilus somni (strain 129Pt) (Haemophilus somnus).